We begin with the raw amino-acid sequence, 146 residues long: SsrA-binding protein (146 aa).

Residues 127 to 139 (KRQTIKDRDNSRE) are compositionally biased toward basic and acidic residues. Residues 127–146 (KRQTIKDRDNSREARKHIRV) are disordered.

This sequence belongs to the SmpB family.

The protein resides in the cytoplasm. In terms of biological role, required for rescue of stalled ribosomes mediated by trans-translation. Binds to transfer-messenger RNA (tmRNA), required for stable association of tmRNA with ribosomes. tmRNA and SmpB together mimic tRNA shape, replacing the anticodon stem-loop with SmpB. tmRNA is encoded by the ssrA gene; the 2 termini fold to resemble tRNA(Ala) and it encodes a 'tag peptide', a short internal open reading frame. During trans-translation Ala-aminoacylated tmRNA acts like a tRNA, entering the A-site of stalled ribosomes, displacing the stalled mRNA. The ribosome then switches to translate the ORF on the tmRNA; the nascent peptide is terminated with the 'tag peptide' encoded by the tmRNA and targeted for degradation. The ribosome is freed to recommence translation, which seems to be the essential function of trans-translation. In Malacoplasma penetrans (strain HF-2) (Mycoplasma penetrans), this protein is SsrA-binding protein.